The following is a 369-amino-acid chain: Prenyltransferase malB (369 aa).

Glu87 contacts substrate. The dimethylallyl diphosphate site is built by Arg100 and Tyr189. Tyr191 provides a ligand contact to substrate.

This sequence belongs to the tryptophan dimethylallyltransferase family.

Prenyltransferase; part of the gene cluster that mediates the biosynthesis of malbrancheamide, a dichlorinated fungal indole alkaloid that belongs to a family of natural products containing a characteristic bicyclo[2.2.2]diazaoctane core. The first step of malbrancheamide biosynthesis involves coupling of L-proline and L-tryptophan by malG, a bimodular NRPS, to produce L-Pro-L-Trp aldehyde through reductive offloading. This compound undergoes spontaneous cyclization and dehydration to give a dienamine which is reverse prenylated at C-2 by malE. The other prenyltransferase present in the cluster, malB, displays modest activity, suggesting that may be a redundant gene in the pathway. Subsequently, a [4+2] Diels-Alder cyclo-addition catalyzed by the bifunctional enzyme malC forms the characteristic bicyclo[2.2.2]diazaoctane ring of premalbrancheamid. Finally, the flavin-dependent halogenase malA catalyzes the iterative dichlorination of the indole ring of premalbrancheamide to yield C-9 monochlorinated malbrancheamide B, C-8 monochlorinated isomalbrancheamide B, and dichlorinated malbrancheamide. MalA is also able to brominate premalbrancheamide at C-9 to yield malbrancheamide C, and, to a lesser extend, at C-8 to yield isomalbrancheamide C. Finally, malA can brominate C-9 monochlorinated malbrancheamide B at C-8 to yield malbrancheamide D, or C-8 monochlorinated isomalbrancheamide B at C-9 to produce isomalbrancheamide D. This Malbranchea aurantiaca protein is Prenyltransferase malB.